The chain runs to 450 residues: Phosphoglucosamine mutase (450 aa).

The active-site Phosphoserine intermediate is the S102. Mg(2+) contacts are provided by S102, D243, D245, and D247. A Phosphoserine modification is found at S102.

Belongs to the phosphohexose mutase family. Mg(2+) serves as cofactor. In terms of processing, activated by phosphorylation.

The enzyme catalyses alpha-D-glucosamine 1-phosphate = D-glucosamine 6-phosphate. Its function is as follows. Catalyzes the conversion of glucosamine-6-phosphate to glucosamine-1-phosphate. In Rhizobium etli (strain CIAT 652), this protein is Phosphoglucosamine mutase.